The primary structure comprises 106 residues: UPF0145 protein Nmul_A0734 (106 aa).

This sequence belongs to the UPF0145 family.

The chain is UPF0145 protein Nmul_A0734 from Nitrosospira multiformis (strain ATCC 25196 / NCIMB 11849 / C 71).